The chain runs to 146 residues: 3-hydroxyacyl-[acyl-carrier-protein] dehydratase FabZ (146 aa).

H49 is an active-site residue.

It belongs to the thioester dehydratase family. FabZ subfamily.

The protein localises to the cytoplasm. It carries out the reaction a (3R)-hydroxyacyl-[ACP] = a (2E)-enoyl-[ACP] + H2O. Functionally, involved in unsaturated fatty acids biosynthesis. Catalyzes the dehydration of short chain beta-hydroxyacyl-ACPs and long chain saturated and unsaturated beta-hydroxyacyl-ACPs. The polypeptide is 3-hydroxyacyl-[acyl-carrier-protein] dehydratase FabZ (Azotobacter vinelandii (strain DJ / ATCC BAA-1303)).